The sequence spans 295 residues: Small ribosomal subunit protein uS2 (295 aa).

The tract at residues 232-295 is disordered; that stretch reads RRRGTDEKPE…DEQPAAAAAE (64 aa). Positions 252-287 are enriched in basic and acidic residues; the sequence is EWERELLEEPKKSDEQPAKSDELPVKTDEQPTKSDE.

The protein belongs to the universal ribosomal protein uS2 family.

This is Small ribosomal subunit protein uS2 from Salinispora tropica (strain ATCC BAA-916 / DSM 44818 / JCM 13857 / NBRC 105044 / CNB-440).